Reading from the N-terminus, the 206-residue chain is Probable thymidylate kinase (206 aa).

ATP is bound at residue 10–17; that stretch reads GIDGSGKS.

It belongs to the thymidylate kinase family.

The catalysed reaction is dTMP + ATP = dTDP + ADP. The protein is Probable thymidylate kinase of Methanosarcina acetivorans (strain ATCC 35395 / DSM 2834 / JCM 12185 / C2A).